The sequence spans 307 residues: Ribosomal RNA small subunit methyltransferase H (307 aa).

S-adenosyl-L-methionine is bound by residues 33–35 (AGH), Asp52, Leu83, Asp97, and Gln104.

The protein belongs to the methyltransferase superfamily. RsmH family.

It is found in the cytoplasm. It catalyses the reaction cytidine(1402) in 16S rRNA + S-adenosyl-L-methionine = N(4)-methylcytidine(1402) in 16S rRNA + S-adenosyl-L-homocysteine + H(+). In terms of biological role, specifically methylates the N4 position of cytidine in position 1402 (C1402) of 16S rRNA. In Sulfurovum sp. (strain NBC37-1), this protein is Ribosomal RNA small subunit methyltransferase H.